Reading from the N-terminus, the 1011-residue chain is Collagen alpha-2(I) chain (1011 aa).

Residues 1-1011 form a disordered region; it reads SGGFDFSFLP…FGYEGDFYRA (1011 aa). 4 positions are modified to 4-hydroxyproline: Pro-10, Pro-13, Pro-35, and Pro-41. Residues 28–67 are compositionally biased toward low complexity; sequence LMGPRGPPGASGAPGPQGFQGPAGEPGEPGQTGPAGARGP. Residue Lys-106 is modified to 5-hydroxylysine; alternate. Lys-106 carries an O-linked (Gal...) hydroxylysine; alternate glycan. The span at 167–182 shows a compositional bias: low complexity; sequence SVGPVGPAGPIGSAGP. Positions 282–291 are enriched in gly residues; the sequence is GESGGKGEPG. Residues 292-302 show a composition bias toward low complexity; it reads SAGPQGPPGSS. Residues 323–332 are compositionally biased toward gly residues; sequence GLRGGPGSRG. Residues 345–361 are compositionally biased toward low complexity; sequence PAGARGASGPAGVRGPS. 4-hydroxyproline occurs at positions 367 and 370. Positions 396 to 415 are enriched in low complexity; the sequence is LPGIDGRPGPIGPAGARGEA. Over residues 464 to 473 the composition is skewed to gly residues; that stretch reads GVQGGKGEQG. Composition is skewed to low complexity over residues 520 to 537 and 549 to 559; these read PGES…SRGP and EPGVVGAPGTA. Positions 560 to 578 are enriched in gly residues; it reads GPAGSGGPGERGAAGIPGG. 2 stretches are compositionally biased toward low complexity: residues 588 to 635 and 642 to 662; these read RGEV…PRGS and VGPA…QPGA. Positions 663-672 are enriched in basic and acidic residues; it reads KGERGTKGPK. Over residues 680-690 the composition is skewed to low complexity; it reads PTGPVGSAGPA. Residues 700–709 are compositionally biased toward gly residues; sequence GSRGDGGPPG. The span at 711–720 shows a compositional bias: low complexity; it reads TGFPGAAGRT. A compositionally biased stretch (gly residues) spans 757 to 766; it reads GETGAGGPPG. 2 stretches are compositionally biased toward low complexity: residues 774–801 and 809–819; these read SGEP…LGLP and LPGVAGAVGEP. Positions 820 to 834 are enriched in gly residues; sequence GPLGIGPPGARGDGL. Low complexity-rich tracts occupy residues 843 to 856 and 872 to 887; these read YAGN…AGAP and EPGP…ALGP. Positions 897-908 are enriched in basic and acidic residues; that stretch reads RGDKGEPGEKGP. Pro residues predominate over residues 981-993; sequence SGPPGPPGPPGPP.

Belongs to the fibrillar collagen family. Trimers of one alpha 2(I) and two alpha 1(I) chains. Interacts (via C-terminus) with TMEM131 (via PapD-L domain); the interaction is direct and is involved in assembly and TRAPPIII ER-to-Golgi transport complex-dependent secretion of collagen. Post-translationally, prolines at the third position of the tripeptide repeating unit (G-X-Y) are hydroxylated in some or all of the chains. In terms of tissue distribution, expressed in bones.

It is found in the secreted. Its subcellular location is the extracellular space. The protein resides in the extracellular matrix. Its function is as follows. Type I collagen is a member of group I collagen (fibrillar forming collagen). This is Collagen alpha-2(I) chain from Neocnus comes (Miller's Hispaniolan ground sloth).